Here is a 373-residue protein sequence, read N- to C-terminus: Cyclin-A3-1 (373 aa).

Residues 50 to 80 are disordered; that stretch reads AVVLKPQPAPRGGKRAASHAAEPKKPAPPPA.

Belongs to the cyclin family. Cyclin AB subfamily.

This Oryza sativa subsp. japonica (Rice) protein is Cyclin-A3-1 (CYCA3-1).